Reading from the N-terminus, the 537-residue chain is Zinc finger and BTB domain-containing protein 18 (537 aa).

A BTB domain is found at 24–91 (CDSTVLVGDA…MYEGKLQFKS (68 aa)). Basic and acidic residues predominate over residues 122–143 (TAEADSTKREEDTSSCSDKVES). 2 disordered regions span residues 122 to 232 (TAEA…RVSA) and 335 to 355 (ASEL…LGGD). 2 stretches are compositionally biased toward low complexity: residues 182 to 195 (RLPS…TTSP) and 208 to 229 (SPAG…ASRR). 4 C2H2-type zinc fingers span residues 385–407 (FMCP…LSTH), 425–447 (PTCS…ERTH), 453–475 (YTCT…AVVH), and 481–504 (HACK…RKFH).

Belongs to the krueppel C2H2-type zinc-finger protein family. ZBTB18 subfamily.

It is found in the nucleus. In terms of biological role, transcriptional repressor that plays a role in various developmental processes. Specifically binds the consensus DNA sequence 5'-[AC]ACATCTG[GT][AC]-3' which contains the E box core, and acts by recruiting chromatin remodeling multiprotein complexes. The polypeptide is Zinc finger and BTB domain-containing protein 18 (zbtb18) (Danio rerio (Zebrafish)).